The sequence spans 447 residues: C4-dicarboxylate transport protein (447 aa).

Helical transmembrane passes span phenylalanine 22–glycine 42, phenylalanine 52–isoleucine 72, alanine 90–valine 110, glycine 159–glycine 179, leucine 199–isoleucine 219, tryptophan 232–valine 252, leucine 325–alanine 347, and alanine 366–valine 386.

It belongs to the dicarboxylate/amino acid:cation symporter (DAACS) (TC 2.A.23) family.

The protein localises to the cell inner membrane. Its function is as follows. Responsible for the transport of dicarboxylates such as succinate, fumarate, and malate from the periplasm across the membrane. This is C4-dicarboxylate transport protein from Stenotrophomonas maltophilia (strain R551-3).